The chain runs to 510 residues: Probable cytochrome P450 4d20 (510 aa).

C455 serves as a coordination point for heme.

Belongs to the cytochrome P450 family. It depends on heme as a cofactor.

The protein localises to the endoplasmic reticulum membrane. It localises to the microsome membrane. Its function is as follows. May be involved in the metabolism of insect hormones and in the breakdown of synthetic insecticides. The sequence is that of Probable cytochrome P450 4d20 (Cyp4d20) from Drosophila melanogaster (Fruit fly).